Here is a 404-residue protein sequence, read N- to C-terminus: Sorting nexin-5 (404 aa).

Position 2 is an N-acetylalanine (alanine 2). Residues 25-172 (LNVDPSLQID…HVFLEYDQDL (148 aa)) form the PX domain. A 1,2-diacyl-sn-glycero-3-phospho-(1D-myo-inositol-4,5-bisphosphate)-binding positions include 40-46 (SERDKVK), 99-105 (FDGPREK), and 113-116 (EGSM). Positions 169 to 261 (DQDLSVRRKN…HSLALEEPTV (93 aa)) are interaction with DOCK1. The interval 183–200 (FGGFFKSVVKSADEVLFS) is membrane-binding amphipathic helix. Serine 193 bears the Phosphoserine mark. The 203-residue stretch at 202–404 (VKEVDDFFEQ…QSCIDLFKNN (203 aa)) folds into the BAR domain. Lysine 275 carries the N6-acetyllysine modification.

This sequence belongs to the sorting nexin family. In terms of assembly, forms heterodimers with BAR domain-containing sorting nexins SNX1 and SNX2; does not homodimerize. The heterodimers are proposed to self-assemble into helical arrays on the membrane to stabilize and expand local membrane curvature underlying endosomal tubule formation. Thought to be a component of the originally described retromer complex (also called SNX-BAR retromer) which is a pentamer containing the heterotrimeric retromer cargo-selective complex (CSC), also described as vacuolar protein sorting subcomplex (VPS), and a heterodimeric membrane-deforming subcomplex formed between SNX1 or SNX2 and SNX5 or SNX6 (also called SNX-BAR subcomplex); the respective CSC and SNX-BAR subcomplexes associate with low affinity. Interacts with SNX1, SNX2, VPS26A, VPS29, VPS35, DCTN1, DOCK1, MIB1, PIP5K1C. Interacts with HGS; increased by PIP5K1C kinase activity and by PtdIns(3P) and/or PtdIns(3,4)P2.

It is found in the endosome. The protein resides in the early endosome. Its subcellular location is the early endosome membrane. The protein localises to the cell membrane. It localises to the cytoplasmic vesicle membrane. It is found in the cytoplasm. The protein resides in the cell projection. Its subcellular location is the phagocytic cup. The protein localises to the ruffle. Its function is as follows. Involved in several stages of intracellular trafficking. Interacts with membranes containing phosphatidylinositol lipids. Acts in part as component of the retromer membrane-deforming SNX-BAR subcomplex. The SNX-BAR retromer mediates retrograde transport of cargo proteins from endosomes to the trans-Golgi network (TGN) and is involved in endosome-to-plasma membrane transport for cargo protein recycling. The SNX-BAR subcomplex functions to deform the donor membrane into a tubular profile called endosome-to-TGN transport carrier (ETC). Does not have in vitro vesicle-to-membrane remodeling activity. Involved in retrograde transport of lysosomal enzyme receptor IGF2R. May function as link between endosomal transport vesicles and dynactin. Plays a role in the internalization of EGFR after EGF stimulation. Involved in EGFR endosomal sorting and degradation; the function involves PIP5K1C and is retromer-independent. Together with PIP5K1C facilitates HGS interaction with ubiquitinated EGFR, which initiates EGFR sorting to intraluminal vesicles (ILVs) of the multivesicular body for subsequent lysosomal degradation. Involved in E-cadherin sorting and degradation; inhibits PIP5K1C-mediated E-cadherin degradation. Plays a role in macropinocytosis. This is Sorting nexin-5 (Snx5) from Rattus norvegicus (Rat).